The primary structure comprises 258 residues: Snake venom serine protease KN12 (258 aa).

A signal peptide spans 1–18 (MVLIRVLANLLILQLSYA). The propeptide occupies 19–24 (QRSSEL). The region spanning 25 to 249 (VIGGDECNIN…HLDWIQNIIA (225 aa)) is the Peptidase S1 domain. Disulfide bonds link cysteine 31–cysteine 163, cysteine 50–cysteine 66, cysteine 98–cysteine 256, cysteine 142–cysteine 210, cysteine 174–cysteine 189, and cysteine 200–cysteine 225. Histidine 65 (charge relay system) is an active-site residue. Residue asparagine 103 is glycosylated (N-linked (GlcNAc...) asparagine). Residue aspartate 110 is the Charge relay system of the active site. Asparagine 121, asparagine 122, asparagine 154, and asparagine 170 each carry an N-linked (GlcNAc...) asparagine glycan. Serine 204 serves as the catalytic Charge relay system. Asparagine 251 carries N-linked (GlcNAc...) asparagine glycosylation.

This sequence belongs to the peptidase S1 family. Snake venom subfamily. In terms of assembly, monomer. As to expression, expressed by the venom gland.

The protein resides in the secreted. Functionally, snake venom serine protease that may act in the hemostasis system of the prey. The polypeptide is Snake venom serine protease KN12 (Trimeresurus stejnegeri (Chinese green tree viper)).